A 39-amino-acid polypeptide reads, in one-letter code: TFINVKCTSPKQCLKPCKDLYGPHAGEKCMNGKCKCYKP.

Cystine bridges form between Cys-7-Cys-29, Cys-13-Cys-34, and Cys-17-Cys-36.

Expressed by the venom gland.

The protein resides in the secreted. Blocks human voltage-gated potassium (Kv) channels Kv1.1/KCNA1, Kv1.2/KCNA2 and Kv1.3/KCNA3. This chain is Potassium channel toxin alpha-KTx 2.23, found in Centruroides bonito (Scorpion).